The primary structure comprises 361 residues: uncharacterized protein (361 aa).

33–40 (GPINSGKT) provides a ligand contact to ATP.

It belongs to the archaeal ATPase family.

This is an uncharacterized protein from Methanocaldococcus jannaschii (strain ATCC 43067 / DSM 2661 / JAL-1 / JCM 10045 / NBRC 100440) (Methanococcus jannaschii).